The following is a 357-amino-acid chain: NADH-quinone oxidoreductase subunit H (357 aa).

A run of 8 helical transmembrane segments spans residues 25–45 (ILII…VVAY), 94–114 (IYLF…VWVV), 130–150 (LLYV…AGWA), 166–186 (LLVS…MIAG), 201–221 (IIYW…ISAL), 254–274 (FFLA…VMFF), 294–314 (VPGI…YLWV), and 329–349 (LSWK…ALMT).

The protein belongs to the complex I subunit 1 family. As to quaternary structure, NDH-1 is composed of 14 different subunits. Subunits NuoA, H, J, K, L, M, N constitute the membrane sector of the complex.

Its subcellular location is the cell inner membrane. The catalysed reaction is a quinone + NADH + 5 H(+)(in) = a quinol + NAD(+) + 4 H(+)(out). NDH-1 shuttles electrons from NADH, via FMN and iron-sulfur (Fe-S) centers, to quinones in the respiratory chain. The immediate electron acceptor for the enzyme in this species is believed to be ubiquinone. Couples the redox reaction to proton translocation (for every two electrons transferred, four hydrogen ions are translocated across the cytoplasmic membrane), and thus conserves the redox energy in a proton gradient. This subunit may bind ubiquinone. The sequence is that of NADH-quinone oxidoreductase subunit H from Ruthia magnifica subsp. Calyptogena magnifica.